A 704-amino-acid chain; its full sequence is Elongation factor G (704 aa).

Positions 8-291 (VRYRNIGISA…AVVEYLPSPS (284 aa)) constitute a tr-type G domain. GTP-binding positions include 17–24 (AHIDAGKT), 88–92 (DTPGH), and 142–145 (NKMD).

The protein belongs to the TRAFAC class translation factor GTPase superfamily. Classic translation factor GTPase family. EF-G/EF-2 subfamily.

Its subcellular location is the cytoplasm. Functionally, catalyzes the GTP-dependent ribosomal translocation step during translation elongation. During this step, the ribosome changes from the pre-translocational (PRE) to the post-translocational (POST) state as the newly formed A-site-bound peptidyl-tRNA and P-site-bound deacylated tRNA move to the P and E sites, respectively. Catalyzes the coordinated movement of the two tRNA molecules, the mRNA and conformational changes in the ribosome. In Blochmanniella pennsylvanica (strain BPEN), this protein is Elongation factor G.